A 149-amino-acid chain; its full sequence is uncharacterized protein (149 aa).

Residues 124-144 (IIIIALIIILANYAPSIIGKI) traverse the membrane as a helical segment.

This sequence belongs to the M.jannaschii MJ0023/MJ0349/MJ1072/MJ1074/MJ1107/MJECL16 family.

It localises to the membrane. This is an uncharacterized protein from Methanocaldococcus jannaschii (strain ATCC 43067 / DSM 2661 / JAL-1 / JCM 10045 / NBRC 100440) (Methanococcus jannaschii).